A 277-amino-acid chain; its full sequence is Ribosomal RNA small subunit methyltransferase A (277 aa).

S-adenosyl-L-methionine contacts are provided by N26, L28, G53, E74, D101, and N123.

This sequence belongs to the class I-like SAM-binding methyltransferase superfamily. rRNA adenine N(6)-methyltransferase family. RsmA subfamily.

The protein localises to the cytoplasm. The enzyme catalyses adenosine(1518)/adenosine(1519) in 16S rRNA + 4 S-adenosyl-L-methionine = N(6)-dimethyladenosine(1518)/N(6)-dimethyladenosine(1519) in 16S rRNA + 4 S-adenosyl-L-homocysteine + 4 H(+). Its function is as follows. Specifically dimethylates two adjacent adenosines (A1518 and A1519) in the loop of a conserved hairpin near the 3'-end of 16S rRNA in the 30S particle. May play a critical role in biogenesis of 30S subunits. This is Ribosomal RNA small subunit methyltransferase A from Opitutus terrae (strain DSM 11246 / JCM 15787 / PB90-1).